A 665-amino-acid chain; its full sequence is Adenylate cyclase 1 (665 aa).

The segment at 1–25 (MLQRSESGFKDIESMQDSNADKPSR) is disordered. Over residues 7–24 (SGFKDIESMQDSNADKPS) the composition is skewed to basic and acidic residues. A run of 2 helical transmembrane segments spans residues 33–53 (SLLGLVMVAMLIVVSATLVGL) and 373–393 (AVSGAVVVVAVLLALVLAHLI). The region spanning 394–444 (TKSLNQLTDSANRLQDLDFATPIDVSSHVAEISTLNGAMNRARDAIFTFAL) is the HAMP domain. Residues 471-603 (TAMFTDIYDF…DTVNVASRLE (133 aa)) form the Guanylate cyclase domain. Mg(2+) contacts are provided by Asp476 and Asp520.

Belongs to the adenylyl cyclase class-3 family. Requires Mg(2+) as cofactor.

It is found in the cell membrane. It carries out the reaction ATP = 3',5'-cyclic AMP + diphosphate. Its function is as follows. Plays essential roles in regulation of cellular metabolism by catalyzing the synthesis of a second messenger, cAMP. The chain is Adenylate cyclase 1 (cya1) from Rhizobium meliloti (strain 1021) (Ensifer meliloti).